A 348-amino-acid polypeptide reads, in one-letter code: Phosphoribosylformylglycinamidine cyclo-ligase (348 aa).

This sequence belongs to the AIR synthase family.

It is found in the cytoplasm. The enzyme catalyses 2-formamido-N(1)-(5-O-phospho-beta-D-ribosyl)acetamidine + ATP = 5-amino-1-(5-phospho-beta-D-ribosyl)imidazole + ADP + phosphate + H(+). Its pathway is purine metabolism; IMP biosynthesis via de novo pathway; 5-amino-1-(5-phospho-D-ribosyl)imidazole from N(2)-formyl-N(1)-(5-phospho-D-ribosyl)glycinamide: step 2/2. This chain is Phosphoribosylformylglycinamidine cyclo-ligase, found in Cereibacter sphaeroides (strain ATCC 17025 / ATH 2.4.3) (Rhodobacter sphaeroides).